A 561-amino-acid chain; its full sequence is MCSLAKSPSSDTSTIVRRSANYDPPIWSFDFIQSLPCKYKGEPYTSRSNKLKEEVKKMLVGMENSLVQLELIDTLQRLGISYHFENEIISILKKYFTNISTNKNPKYDLYATALEFRLLREYGYAVPQEIFNDFKDETGKFKASIKNDDIKGVLALYEASFYVKNGENILEEARVFTTEYLKRYVMMIDQNMILNDNMAILVRHALEMPLHWRTIRAEAKWFIEEYEKTQDKNGTLLEFAKLDFNMLQSIFQEDLKHVSRWWEHSKLGKNKMVYARDRLVEAFLWQVGIRFEPQFSHFRRISARIYALITIIDDIYDVYGTLEELELFTKAVERWDVKTVDELPDYMKLPFFTLFNTVNEMAYDVLEEHNFVSVEYLKNSWAELCRCYLEEAKWFYSGYKPTLKKYIENASLSIGGQVIFVYAFFSLTKSITNEALESLQEGHYAACRQGSLMLRLADDLGTSSDELKRGDILKSVQCYMHETGVSEDEAREHIKFLISEIWKEMNDEDEYNSIFSKEFVQACKNLGRMSLFMYQHGDGHASQDSHSRKRISDLIINPIPL.

Positions 276, 313, 317, 455, and 458 each coordinate (2E)-geranyl diphosphate. Mg(2+) contacts are provided by D313 and D317. Residues 313 to 317 (DDIYD) carry the DDXXD motif motif. Mg(2+) contacts are provided by D458, T462, and E466.

The protein belongs to the terpene synthase family. Tpsb subfamily. Mg(2+) is required as a cofactor. The cofactor is Mn(2+). Expressed in glandular trichomes two to four weeks after flowering onset.

The catalysed reaction is (2E)-geranyl diphosphate = (1R,5R)-alpha-pinene + diphosphate. It catalyses the reaction (2E)-geranyl diphosphate = (4S)-limonene + diphosphate. The enzyme catalyses (2E)-geranyl diphosphate = sabinene + diphosphate. It carries out the reaction (2E)-geranyl diphosphate = beta-phellandrene + diphosphate. The catalysed reaction is (2E)-geranyl diphosphate = camphene + diphosphate. It catalyses the reaction (2E)-geranyl diphosphate = isoterpinolene + diphosphate. The protein operates within secondary metabolite biosynthesis; terpenoid biosynthesis. Its pathway is terpene metabolism; (-)-alpha-pinene biosynthesis; (-)-alpha-pinene from geranyl diphosphate: step 1/1. Its function is as follows. Involved in monoterpene (C10) olefins biosynthesis, constituants of cannabinoids and terpenoids-rich resins. Catalyzes mainly the conversion of (2E)-geranyl diphosphate to (+)-alpha-pinene, and also produces minor products such as camphene, sabinene, beta-phellandrene, (-)-limonene and isoterpinolene. The protein is (+)-alpha-pinene synthase TPS2FN of Cannabis sativa (Hemp).